A 231-amino-acid chain; its full sequence is Aquaporin Z (231 aa).

The next 2 helical transmembrane spans lie at 9–29 (CFGT…AAGF) and 34–54 (IGFA…AFAV). The short motif at 63–65 (NPA) is the NPA 1 element. 3 helical membrane passes run 82–102 (VGYV…LYLI), 129–149 (YSML…LLVI), and 156–176 (FAPA…IHLI). The NPA 2 signature appears at 186–188 (NPA). The chain crosses the membrane as a helical span at residues 202-222 (LEQLWFFWVVPIVGGIIGGLI).

The protein belongs to the MIP/aquaporin (TC 1.A.8) family. In terms of assembly, homotetramer.

It is found in the cell inner membrane. It carries out the reaction H2O(in) = H2O(out). In terms of biological role, channel that permits osmotically driven movement of water in both directions. It is involved in the osmoregulation and in the maintenance of cell turgor during volume expansion in rapidly growing cells. It mediates rapid entry or exit of water in response to abrupt changes in osmolarity. The polypeptide is Aquaporin Z (Escherichia coli O157:H7).